The chain runs to 419 residues: tRNA(Met) cytidine acetate ligase (419 aa).

ATP-binding positions include 7 to 20 (ITEY…HLHH), glycine 101, asparagine 163, and arginine 188.

This sequence belongs to the TmcAL family.

Its subcellular location is the cytoplasm. The catalysed reaction is cytidine(34) in elongator tRNA(Met) + acetate + ATP = N(4)-acetylcytidine(34) in elongator tRNA(Met) + AMP + diphosphate. In terms of biological role, catalyzes the formation of N(4)-acetylcytidine (ac(4)C) at the wobble position of elongator tRNA(Met), using acetate and ATP as substrates. First activates an acetate ion to form acetyladenylate (Ac-AMP) and then transfers the acetyl group to tRNA to form ac(4)C34. The sequence is that of tRNA(Met) cytidine acetate ligase from Syntrophotalea carbinolica (strain DSM 2380 / NBRC 103641 / GraBd1) (Pelobacter carbinolicus).